A 137-amino-acid polypeptide reads, in one-letter code: Holo-[acyl-carrier-protein] synthase (137 aa).

Mg(2+) is bound by residues D8 and E57.

It belongs to the P-Pant transferase superfamily. AcpS family. It depends on Mg(2+) as a cofactor.

It is found in the cytoplasm. It catalyses the reaction apo-[ACP] + CoA = holo-[ACP] + adenosine 3',5'-bisphosphate + H(+). Functionally, transfers the 4'-phosphopantetheine moiety from coenzyme A to a Ser of acyl-carrier-protein. The chain is Holo-[acyl-carrier-protein] synthase from Cereibacter sphaeroides (strain ATCC 17029 / ATH 2.4.9) (Rhodobacter sphaeroides).